Here is a 523-residue protein sequence, read N- to C-terminus: Galactarate dehydratase (L-threo-forming) (523 aa).

This sequence belongs to the UxaA family. In terms of assembly, homodimer. It depends on Fe(2+) as a cofactor.

The catalysed reaction is galactarate = 5-dehydro-4-deoxy-D-glucarate + H2O. The protein operates within carbohydrate acid metabolism; galactarate degradation; D-glycerate from galactarate: step 1/3. Catalyzes the dehydration of galactarate to form 5-dehydro-4-deoxy-D-glucarate (5-KDG). In Escherichia coli (strain K12), this protein is Galactarate dehydratase (L-threo-forming).